An 835-amino-acid polypeptide reads, in one-letter code: Cap-specific mRNA (nucleoside-2'-O-)-methyltransferase 1 (835 aa).

Positions 1 to 66 (MKRRNDSECT…TEGKQRSSDS (66 aa)) are disordered. A Bipartite nuclear localization signal motif is present at residues 2–19 (KRRNDSECTAPLKKQKKR). Phosphoserine is present on residues S28, S31, S53, S66, and S91. Residues 57-66 (TEGKQRSSDS) are compositionally biased toward basic and acidic residues. The G-patch domain maps to 87-133 (YNSVSQKLMAKMGFKEGEGLGKYSQGRKDIVEASNQKGRRGLGLTLQ). Residue K108 is modified to N6-acetyllysine. Substrate contacts are provided by residues 203–207 (KSVFD) and R218. The region spanning 231–450 (FFLNRAAMKM…ERYVVCKGLK (220 aa)) is the RrmJ-type SAM-dependent 2'-O-MTase domain. Position 234 (N234) interacts with S-adenosyl-L-methionine. The active site involves K239. S-adenosyl-L-methionine-binding positions include 277–283 (CAGPGGF) and 335–336 (DI). The active site involves D364. A substrate-binding site is contributed by 374–376 (NLQ). The Proton acceptor role is filled by K404. N439 is a substrate binding site. Positions 727 to 835 (SSGTPKLSYT…VLSFIQTHSA (109 aa)) are interaction with POLR2A. Residues 752-786 (RTVNEPWTMGFSKSFKRKFFYNKKTKNSTFDLPAD) form the WW domain.

Interacts with POLR2A (via C-terminus).

The protein resides in the nucleus. The catalysed reaction is a 5'-end (N(7)-methyl 5'-triphosphoguanosine)-ribonucleoside in mRNA + S-adenosyl-L-methionine = a 5'-end (N(7)-methyl 5'-triphosphoguanosine)-(2'-O-methyl-ribonucleoside) in mRNA + S-adenosyl-L-homocysteine + H(+). Its function is as follows. S-adenosyl-L-methionine-dependent methyltransferase that mediates mRNA cap1 2'-O-ribose methylation to the 5'-cap structure of mRNAs. Methylates the ribose of the first nucleotide of a m(7)GpppG-capped mRNA and small nuclear RNA (snRNA) to produce m(7)GpppRm (cap1). Displays a preference for cap0 transcripts. Cap1 modification is linked to higher levels of translation. May be involved in the interferon response pathway. This is Cap-specific mRNA (nucleoside-2'-O-)-methyltransferase 1 (CMTR1) from Bos taurus (Bovine).